The following is an 81-amino-acid chain: Acyl carrier protein (81 aa).

The Carrier domain occupies Gln3–Gln78. O-(pantetheine 4'-phosphoryl)serine is present on Ser38.

Belongs to the acyl carrier protein (ACP) family. 4'-phosphopantetheine is transferred from CoA to a specific serine of apo-ACP by AcpS. This modification is essential for activity because fatty acids are bound in thioester linkage to the sulfhydryl of the prosthetic group.

The protein resides in the cytoplasm. The protein operates within lipid metabolism; fatty acid biosynthesis. Functionally, carrier of the growing fatty acid chain in fatty acid biosynthesis. The sequence is that of Acyl carrier protein from Crocosphaera subtropica (strain ATCC 51142 / BH68) (Cyanothece sp. (strain ATCC 51142)).